A 109-amino-acid polypeptide reads, in one-letter code: MKTLLLAVAVVAFVCLGSADQLGLGRQQIDWGQGQAVGPPYTLCFECNRMTSSDCSTALRCYRGSCYTLYRPDENCELKWAVKGCAETCPTAGPNERVKCCRSPRCNDD.

Positions 1-19 are cleaved as a signal peptide; sequence MKTLLLAVAVVAFVCLGSA. A propeptide spanning residues 20–34 is cleaved from the precursor; that stretch reads DQLGLGRQQIDWGQG. Gln-35 carries the pyrrolidone carboxylic acid modification. Intrachain disulfides connect Cys-44/Cys-66, Cys-47/Cys-55, Cys-61/Cys-85, Cys-89/Cys-100, and Cys-101/Cys-106.

It belongs to the three-finger toxin family. Ancestral subfamily. Boigatoxin sub-subfamily. In terms of assembly, heterodimer of A and B chains; disulfide-linked. Expressed by the venom gland.

The protein resides in the secreted. Its function is as follows. This bird and reptile-specific postsynaptic neurotoxin inhibits the chick muscle alpha-1-beta-1-gamma-delta (CHRNA1-CHRNB1-CHRNG-CHNRD) nicotinic acetylcholine receptor (nAChR) 100-fold more compared with the mouse receptor. In vivo, produces rapid flaccid paralysis, dyspnea and increased respiratory rate in geckos. At sublethal doses geckos were immobilized for up to three days and then recovered. Chicks injected with lethal doses showed rapid onset of inactivity, dyspnea and neck droop, and no extended paralysis with survival was seen. This is Irditoxin subunit A from Boiga irregularis (Brown tree snake).